Reading from the N-terminus, the 322-residue chain is Cytochrome c biogenesis protein CcsA (322 aa).

8 helical membrane-spanning segments follow: residues 9–29, 44–64, 71–91, 98–118, 143–163, 226–246, 253–273, and 287–307; these read ILTH…LITL, GMIA…IYSG, LYES…VPYF, LTTI…SGLL, MILS…LLVI, VISL…VWAN, WSWD…AIYL, and AIVA…VNLL.

It belongs to the CcmF/CycK/Ccl1/NrfE/CcsA family. In terms of assembly, may interact with Ccs1.

It localises to the plastid. Its subcellular location is the chloroplast thylakoid membrane. In terms of biological role, required during biogenesis of c-type cytochromes (cytochrome c6 and cytochrome f) at the step of heme attachment. This Helianthus annuus (Common sunflower) protein is Cytochrome c biogenesis protein CcsA.